The following is a 75-amino-acid chain: MNPSEMQRKGPPRRWCLQVYPTAPKRQRPSRTGHDDDGGFVEKKRGKCGEKQERSDCYCVCVERSRHRRLHFVMC.

The interval 22–43 (TAPKRQRPSRTGHDDDGGFVEK) is disordered. Residues 32 to 43 (TGHDDDGGFVEK) are compositionally biased toward basic and acidic residues.

Transcript detectable in many tumor cell lines and tumor tissues.

It localises to the nucleus. Functionally, may possess a function in tumorigenesis. In Homo sapiens (Human), this protein is Endogenous retrovirus group K member 24 Np9 protein (ERVK-24).